The chain runs to 396 residues: Probable sugar efflux transporter (396 aa).

The Cytoplasmic portion of the chain corresponds to 1 to 14 (MTINPVSRKVAWLR). The chain crosses the membrane as a helical span at residues 15–35 (VVTLAIAAFIFNTTEFVPVGL). Residues 36 to 49 (LSDIAESFHMQTAQ) lie on the Periplasmic side of the membrane. The helical transmembrane segment at 50–70 (VGIMLTIYAWVVAVMSLPFML) threads the bilayer. Topologically, residues 71 to 80 (LTSQMERRKL) are cytoplasmic. A helical membrane pass occupies residues 81 to 101 (LIYLFVLFIASHVLSFLAWNF). A topological domain (periplasmic) is located at residue Thr102. The chain crosses the membrane as a helical span at residues 103–123 (VLVISRIGIAFAHAIFWSITA). Residues 124–135 (SLAIRLAPAGKR) are Cytoplasmic-facing. Residues 136 to 156 (AQALSLIATGTALAMVLGLPI) traverse the membrane as a helical segment. Residues 157–168 (GRVVGQYFGWRT) are Periplasmic-facing. Residues 169 to 189 (TFFAIGMGALITLLCLIKLLP) traverse the membrane as a helical segment. Topologically, residues 190–208 (KLPSEHSGSLKSLPLLFRR) are cytoplasmic. The helical transmembrane segment at 209-229 (PALMSLYVLTVVVVTAHYTAY) threads the bilayer. Over 230–245 (SYIEPFVQNVAGLSAN) the chain is Periplasmic. A helical membrane pass occupies residues 246–266 (FATVLLLILGGAGIIGSLVFG). Topologically, residues 267 to 274 (KLGNRHAS) are cytoplasmic. A helical membrane pass occupies residues 275 to 295 (SLVSIAIALLVVCLLLLLPAA). Residues 296-300 (ESEAH) are Periplasmic-facing. Residues 301-321 (LAILSIFWGIAIMVIGLGMQV) traverse the membrane as a helical segment. Residues 322 to 332 (KVLALAPDATD) are Cytoplasmic-facing. A helical membrane pass occupies residues 333–353 (VAMALFSGIFNIGIGAGALVG). At 354–363 (NQVSLHWSMS) the chain is on the periplasmic side. A helical transmembrane segment spans residues 364 to 384 (AIGYIGAIPACAALVWAVLIF). At 385 to 396 (RKWPVTLEEQPH) the chain is on the cytoplasmic side.

It belongs to the major facilitator superfamily. SotB (TC 2.A.1.2) family.

It localises to the cell inner membrane. Involved in the efflux of sugars. The physiological role may be the reduction of the intracellular concentration of toxic sugars or sugar metabolites. The protein is Probable sugar efflux transporter of Salmonella typhimurium (strain LT2 / SGSC1412 / ATCC 700720).